Reading from the N-terminus, the 212-residue chain is Glycerol-3-phosphate acyltransferase (212 aa).

A run of 5 helical transmembrane segments spans residues Ala-5–Cys-25, Val-53–Ala-73, Pro-80–Phe-100, Phe-112–Leu-132, and Gly-138–Phe-158.

The protein belongs to the PlsY family. Probably interacts with PlsX.

The protein localises to the cell inner membrane. The catalysed reaction is an acyl phosphate + sn-glycerol 3-phosphate = a 1-acyl-sn-glycero-3-phosphate + phosphate. It functions in the pathway lipid metabolism; phospholipid metabolism. Catalyzes the transfer of an acyl group from acyl-phosphate (acyl-PO(4)) to glycerol-3-phosphate (G3P) to form lysophosphatidic acid (LPA). This enzyme utilizes acyl-phosphate as fatty acyl donor, but not acyl-CoA or acyl-ACP. This chain is Glycerol-3-phosphate acyltransferase, found in Serratia proteamaculans (strain 568).